A 127-amino-acid polypeptide reads, in one-letter code: Protein yippee-like 4 (127 aa).

The Yippee domain maps to 27–124 (RTYSCVHCRA…IEMSHMVKDN (98 aa)). Zn(2+)-binding residues include cysteine 31, cysteine 34, cysteine 87, and cysteine 90. Threonine 92 and threonine 93 each carry phosphothreonine. Phosphotyrosine is present on tyrosine 98.

The protein belongs to the yippee family.

The protein resides in the nucleus. Its subcellular location is the nucleolus. In Chlorocebus aethiops (Green monkey), this protein is Protein yippee-like 4 (YPEL4).